Consider the following 226-residue polypeptide: NADH-ubiquinone oxidoreductase chain 6 (226 aa).

5 helical membrane-spanning segments follow: residues 2-22 (STLG…FVIL), 28-48 (IYSI…LLTV), 56-76 (IYIL…VMMI), 90-110 (YNIY…ILIT), and 169-189 (IWFI…IYIT).

The protein belongs to the complex I subunit 6 family.

The protein resides in the mitochondrion membrane. The catalysed reaction is a ubiquinone + NADH + 5 H(+)(in) = a ubiquinol + NAD(+) + 4 H(+)(out). Core subunit of the mitochondrial membrane respiratory chain NADH dehydrogenase (Complex I) that is believed to belong to the minimal assembly required for catalysis. Complex I functions in the transfer of electrons from NADH to the respiratory chain. The immediate electron acceptor for the enzyme is believed to be ubiquinone. The sequence is that of NADH-ubiquinone oxidoreductase chain 6 (nad6) from Dictyostelium citrinum (Slime mold).